A 21-amino-acid chain; its full sequence is Phenol-soluble modulin alpha 1 peptide (21 aa).

This sequence belongs to the phenol-soluble modulin alpha peptides family.

Its function is as follows. Peptide which can recruit, activate and subsequently lyse human neutrophils, thus eliminating the main cellular defense against infection. This is Phenol-soluble modulin alpha 1 peptide (psmA1) from Staphylococcus aureus (strain Mu3 / ATCC 700698).